Here is a 432-residue protein sequence, read N- to C-terminus: tRNA(Ile)-lysidine synthase (432 aa).

Position 20–25 (20–25 (SGGLDS)) interacts with ATP.

It belongs to the tRNA(Ile)-lysidine synthase family.

The protein localises to the cytoplasm. It carries out the reaction cytidine(34) in tRNA(Ile2) + L-lysine + ATP = lysidine(34) in tRNA(Ile2) + AMP + diphosphate + H(+). Functionally, ligates lysine onto the cytidine present at position 34 of the AUA codon-specific tRNA(Ile) that contains the anticodon CAU, in an ATP-dependent manner. Cytidine is converted to lysidine, thus changing the amino acid specificity of the tRNA from methionine to isoleucine. The chain is tRNA(Ile)-lysidine synthase from Shigella flexneri.